Here is a 361-residue protein sequence, read N- to C-terminus: BBSome complex member bbs-5 (361 aa).

This sequence belongs to the BBS5 family. As to quaternary structure, part of BBSome complex, that contains at least bbs-1, bbs-2, bbs-4, bbs-5, osm-12, bbs-8/ttc-8 and bbs-9. Interacts with bbs-4 (via C-terminus); the interaction is direct.

The protein localises to the cell projection. The protein resides in the cilium membrane. It is found in the cytoplasm. It localises to the cytoskeleton. Its subcellular location is the cilium basal body. The protein localises to the microtubule organizing center. The protein resides in the centrosome. It is found in the centriolar satellite. Functionally, component of the BBSome complex. The BBSome complex is thought to function as a coat complex required for sorting of specific membrane proteins to the primary cilia. The BBSome complex is required for ciliogenesis but is dispensable for centriolar satellite function. Required for BBSome complex ciliary localization but not for the proper complex assembly. Required, redundantly with bbs-4, for cilia biogenesis and both the assembly and movement of intraflagellar transport proteins along the ciliary axoneme. Plays a role in the removal of degraded mechanosensory receptors within the cilia. In Caenorhabditis elegans, this protein is BBSome complex member bbs-5.